We begin with the raw amino-acid sequence, 287 residues long: ATP synthase gamma chain (287 aa).

It belongs to the ATPase gamma chain family. In terms of assembly, F-type ATPases have 2 components, CF(1) - the catalytic core - and CF(0) - the membrane proton channel. CF(1) has five subunits: alpha(3), beta(3), gamma(1), delta(1), epsilon(1). CF(0) has three main subunits: a, b and c.

The protein resides in the cell inner membrane. Functionally, produces ATP from ADP in the presence of a proton gradient across the membrane. The gamma chain is believed to be important in regulating ATPase activity and the flow of protons through the CF(0) complex. This chain is ATP synthase gamma chain, found in Xanthomonas campestris pv. campestris (strain B100).